A 405-amino-acid chain; its full sequence is L-rhamnonate dehydratase (405 aa).

Substrate contacts are provided by His33 and Arg59. Residues Asp226, Glu252, and Glu280 each coordinate Mg(2+). His329 serves as the catalytic Proton acceptor. Substrate is bound at residue Glu349.

This sequence belongs to the mandelate racemase/muconate lactonizing enzyme family. RhamD subfamily. As to quaternary structure, homooctamer; tetramer of dimers. Mg(2+) is required as a cofactor.

It catalyses the reaction L-rhamnonate = 2-dehydro-3-deoxy-L-rhamnonate + H2O. Functionally, catalyzes the dehydration of L-rhamnonate to 2-keto-3-deoxy-L-rhamnonate (KDR). The chain is L-rhamnonate dehydratase from Escherichia coli (strain K12 / DH10B).